Consider the following 347-residue polypeptide: uncharacterized protein (347 aa).

The segment at 5–44 adopts an RING-type zinc-finger fold; it reads CTICHNTPNRPVRLDCNHEFCYICIKGSIQNDMLNCAVCR. One can recognise a WWE domain in the interval 244–321; sequence NVQANFNVAR…NLDAWRQIKR (78 aa).

This is an uncharacterized protein from Caenorhabditis elegans.